Consider the following 241-residue polypeptide: Phosphoadenosine 5'-phosphosulfate reductase (241 aa).

C235 functions as the Nucleophile; cysteine thiosulfonate intermediate in the catalytic mechanism.

Belongs to the PAPS reductase family. CysH subfamily.

It localises to the cytoplasm. It catalyses the reaction [thioredoxin]-disulfide + sulfite + adenosine 3',5'-bisphosphate + 2 H(+) = [thioredoxin]-dithiol + 3'-phosphoadenylyl sulfate. It participates in sulfur metabolism; hydrogen sulfide biosynthesis; sulfite from sulfate: step 3/3. Functionally, catalyzes the formation of sulfite from phosphoadenosine 5'-phosphosulfate (PAPS) using thioredoxin as an electron donor. The chain is Phosphoadenosine 5'-phosphosulfate reductase from Xanthomonas axonopodis pv. citri (strain 306).